The sequence spans 485 residues: Glutamyl-tRNA(Gln) amidotransferase subunit A (485 aa).

Residues Lys79 and Ser154 each act as charge relay system in the active site. The active-site Acyl-ester intermediate is Ser178.

The protein belongs to the amidase family. GatA subfamily. As to quaternary structure, heterotrimer of A, B and C subunits.

The enzyme catalyses L-glutamyl-tRNA(Gln) + L-glutamine + ATP + H2O = L-glutaminyl-tRNA(Gln) + L-glutamate + ADP + phosphate + H(+). In terms of biological role, allows the formation of correctly charged Gln-tRNA(Gln) through the transamidation of misacylated Glu-tRNA(Gln) in organisms which lack glutaminyl-tRNA synthetase. The reaction takes place in the presence of glutamine and ATP through an activated gamma-phospho-Glu-tRNA(Gln). In Geobacillus stearothermophilus (Bacillus stearothermophilus), this protein is Glutamyl-tRNA(Gln) amidotransferase subunit A.